A 420-amino-acid chain; its full sequence is Exodeoxyribonuclease 7 large subunit (420 aa).

This sequence belongs to the XseA family. In terms of assembly, heterooligomer composed of large and small subunits.

It localises to the cytoplasm. It carries out the reaction Exonucleolytic cleavage in either 5'- to 3'- or 3'- to 5'-direction to yield nucleoside 5'-phosphates.. Bidirectionally degrades single-stranded DNA into large acid-insoluble oligonucleotides, which are then degraded further into small acid-soluble oligonucleotides. The polypeptide is Exodeoxyribonuclease 7 large subunit (Helicobacter pylori (strain HPAG1)).